The following is a 1016-amino-acid chain: Formate dehydrogenase-O major subunit (1016 aa).

The tat-type signal signal peptide spans Met-1–Ala-33. Positions Thr-43–Ser-106 constitute a 4Fe-4S Mo/W bis-MGD-type domain. 4 residues coordinate [4Fe-4S] cluster: Cys-50, Cys-53, Cys-57, and Cys-92. A non-standard amino acid (selenocysteine) is located at residue Sec-196.

It belongs to the prokaryotic molybdopterin-containing oxidoreductase family. As to quaternary structure, formate dehydrogenase is a membrane-bound complex, formed by subunits alpha, beta and gamma. Mo-bis(molybdopterin guanine dinucleotide) is required as a cofactor. It depends on [4Fe-4S] cluster as a cofactor. Exported by the Tat system. The position of the signal peptide cleavage has not been experimentally proven.

The protein resides in the periplasm. The enzyme catalyses formate + NAD(+) = CO2 + NADH. In terms of biological role, allows to use formate as major electron donor during aerobic respiration. Subunit alpha possibly forms the active site. In Escherichia coli (strain K12), this protein is Formate dehydrogenase-O major subunit (fdoG).